We begin with the raw amino-acid sequence, 180 residues long: UPF0102 protein Tery_0733 (180 aa).

Belongs to the UPF0102 family.

The chain is UPF0102 protein Tery_0733 from Trichodesmium erythraeum (strain IMS101).